The sequence spans 146 residues: Universal stress protein MTH_1154 (146 aa).

Belongs to the universal stress protein A family.

This Methanothermobacter thermautotrophicus (strain ATCC 29096 / DSM 1053 / JCM 10044 / NBRC 100330 / Delta H) (Methanobacterium thermoautotrophicum) protein is Universal stress protein MTH_1154.